Here is a 346-residue protein sequence, read N- to C-terminus: NADH-ubiquinone oxidoreductase chain 2 (346 aa).

11 helical membrane-spanning segments follow: residues methionine 1–serine 21, tryptophan 26–tryptophan 46, phenylalanine 60–glycine 80, methionine 96–valine 116, leucine 122–leucine 142, serine 151–glycine 171, leucine 178–serine 198, leucine 199–leucine 219, valine 242–glycine 262, leucine 274–leucine 294, and leucine 320–glycine 340.

This sequence belongs to the complex I subunit 2 family.

The protein resides in the mitochondrion inner membrane. It carries out the reaction a ubiquinone + NADH + 5 H(+)(in) = a ubiquinol + NAD(+) + 4 H(+)(out). Functionally, core subunit of the mitochondrial membrane respiratory chain NADH dehydrogenase (Complex I) that is believed to belong to the minimal assembly required for catalysis. Complex I functions in the transfer of electrons from NADH to the respiratory chain. The immediate electron acceptor for the enzyme is believed to be ubiquinone. In Branchiostoma lanceolatum (Common lancelet), this protein is NADH-ubiquinone oxidoreductase chain 2 (ND2).